The primary structure comprises 263 residues: Non-homologous end joining protein Ku 3 (263 aa).

The Ku domain maps to 6–169 (FGLVSVPVQL…WADEVRDPHR (164 aa)).

Belongs to the prokaryotic Ku family. As to quaternary structure, homodimer. Interacts with LigD.

Functionally, with LigD forms a non-homologous end joining (NHEJ) DNA repair enzyme, which repairs dsDNA breaks with reduced fidelity. Binds linear dsDNA with 5'- and 3'- overhangs but not closed circular dsDNA nor ssDNA. Recruits and stimulates the ligase activity of LigD. In Saccharopolyspora erythraea (strain ATCC 11635 / DSM 40517 / JCM 4748 / NBRC 13426 / NCIMB 8594 / NRRL 2338), this protein is Non-homologous end joining protein Ku 3.